A 277-amino-acid chain; its full sequence is tRNA U34 carboxymethyltransferase (277 aa).

Carboxy-S-adenosyl-L-methionine contacts are provided by residues lysine 46, tryptophan 60, lysine 65, glycine 84, 106 to 108 (DPS), 133 to 134 (VE), tyrosine 153, and arginine 268.

The protein belongs to the class I-like SAM-binding methyltransferase superfamily. CmoB family. Homotetramer.

It catalyses the reaction carboxy-S-adenosyl-L-methionine + 5-hydroxyuridine(34) in tRNA = 5-carboxymethoxyuridine(34) in tRNA + S-adenosyl-L-homocysteine + H(+). In terms of biological role, catalyzes carboxymethyl transfer from carboxy-S-adenosyl-L-methionine (Cx-SAM) to 5-hydroxyuridine (ho5U) to form 5-carboxymethoxyuridine (cmo5U) at position 34 in tRNAs. This chain is tRNA U34 carboxymethyltransferase, found in Wolinella succinogenes (strain ATCC 29543 / DSM 1740 / CCUG 13145 / JCM 31913 / LMG 7466 / NCTC 11488 / FDC 602W) (Vibrio succinogenes).